Here is a 213-residue protein sequence, read N- to C-terminus: Probable nicotinate-nucleotide adenylyltransferase (213 aa).

Belongs to the NadD family.

It carries out the reaction nicotinate beta-D-ribonucleotide + ATP + H(+) = deamido-NAD(+) + diphosphate. The protein operates within cofactor biosynthesis; NAD(+) biosynthesis; deamido-NAD(+) from nicotinate D-ribonucleotide: step 1/1. Its function is as follows. Catalyzes the reversible adenylation of nicotinate mononucleotide (NaMN) to nicotinic acid adenine dinucleotide (NaAD). The polypeptide is Probable nicotinate-nucleotide adenylyltransferase (Pectobacterium atrosepticum (strain SCRI 1043 / ATCC BAA-672) (Erwinia carotovora subsp. atroseptica)).